We begin with the raw amino-acid sequence, 142 residues long: Ribosomal RNA large subunit methyltransferase H (142 aa).

S-adenosyl-L-methionine-binding residues include Leu-55 and Gly-87.

Belongs to the RNA methyltransferase RlmH family. In terms of assembly, homodimer.

The protein resides in the cytoplasm. The catalysed reaction is pseudouridine(1915) in 23S rRNA + S-adenosyl-L-methionine = N(3)-methylpseudouridine(1915) in 23S rRNA + S-adenosyl-L-homocysteine + H(+). In terms of biological role, specifically methylates the pseudouridine at position 1915 (m3Psi1915) in 23S rRNA. This chain is Ribosomal RNA large subunit methyltransferase H, found in Sphingopyxis alaskensis (strain DSM 13593 / LMG 18877 / RB2256) (Sphingomonas alaskensis).